A 1328-amino-acid polypeptide reads, in one-letter code: Myb-binding protein 1A (1328 aa).

A disordered region spans residues 1–22 (MESRDPAQPMSPGEATQSGARP). The interval 1–582 (MESRDPAQPM…WDRMLQTLKE (582 aa)) is interaction with MYB. Ser-11 is subject to Phosphoserine. 2 positions are modified to N6-acetyllysine: Lys-71 and Lys-158. 2 consecutive short sequence motifs (nuclear export signal) follow at residues 240–258 (SDEN…ASSV) and 263–281 (KLPA…EDKF). The segment at 698–753 (SEDENDRVVVTDDSDERRLKGAEDKSEEGEDNRSSESEEESEGEESEEEERDGDVD) is disordered. Over residues 703 to 721 (DRVVVTDDSDERRLKGAED) the composition is skewed to basic and acidic residues. Positions 734 to 752 (SEEESEGEESEEEERDGDV) are enriched in acidic residues. A Phosphoserine modification is found at Ser-775. A disordered region spans residues 1146–1292 (RPKLEKKDAK…KKGVLGKSPL (147 aa)). Positions 1147 to 1156 (PKLEKKDAKE) are enriched in basic and acidic residues. Residue Lys-1148 forms a Glycyl lysine isopeptide (Lys-Gly) (interchain with G-Cter in SUMO2) linkage. Residues 1151-1328 (KKDAKEIPSA…KAQVRKAGKP (178 aa)) are required for nuclear and nucleolar localization. Ser-1159 and Ser-1163 each carry phosphoserine. Basic residues predominate over residues 1166-1184 (SKKRKKKGFLPETKKRKKR). Position 1186 is a phosphoserine (Ser-1186). Phosphothreonine is present on residues Thr-1190 and Thr-1196. Position 1207 is a phosphoserine (Ser-1207). The span at 1209–1218 (GRKKRNRTKA) shows a compositional bias: basic residues. Position 1232 is a phosphoserine (Ser-1232). Thr-1239 is subject to Phosphothreonine. Phosphoserine is present on Ser-1241. Thr-1244 bears the Phosphothreonine mark. Phosphoserine occurs at positions 1248 and 1267. Thr-1269 is subject to Phosphothreonine. 2 positions are modified to phosphoserine: Ser-1290 and Ser-1303. A disordered region spans residues 1306 to 1328 (IRSPSLLQSGAKKKAQVRKAGKP). Arg-1307 is subject to Citrulline. 3 positions are modified to phosphoserine: Ser-1308, Ser-1310, and Ser-1314. Over residues 1316–1328 (AKKKAQVRKAGKP) the composition is skewed to basic residues.

This sequence belongs to the MYBBP1A family. In terms of assembly, binds to and represses JUN and MYB via the leucine zipper regions present in these proteins. Also binds to and represses PPARGC1A: this interaction is abrogated when PPARGC1A is phosphorylated by MAPK1/ERK. Binds to and stimulates transcription by AHR. Binds to KPNA2. Interacts with CLOCK and CRY1. Component of the B-WICH complex, at least composed of SMARCA5/SNF2H, BAZ1B/WSTF, SF3B1, DEK, MYO1C, ERCC6, MYBBP1A and DDX21. Citrullinated by PADI4.

It localises to the cytoplasm. It is found in the nucleus. The protein localises to the nucleolus. Functionally, may activate or repress transcription via interactions with sequence specific DNA-binding proteins. Repression may be mediated at least in part by histone deacetylase activity (HDAC activity). Acts as a corepressor and in concert with CRY1, represses the transcription of the core circadian clock component PER2. Preferentially binds to dimethylated histone H3 'Lys-9' (H3K9me2) on the PER2 promoter. Has a role in rRNA biogenesis together with PWP1. This chain is Myb-binding protein 1A (MYBBP1A), found in Homo sapiens (Human).